Reading from the N-terminus, the 385-residue chain is O-phospho-L-seryl-tRNA:Cys-tRNA synthase (385 aa).

Pyridoxal 5'-phosphate contacts are provided by residues 89–90 (AR), asparagine 195, and 218–220 (SGH). Position 221 is an N6-(pyridoxal phosphate)lysine (lysine 221).

This sequence belongs to the SepCysS family. As to quaternary structure, homodimer. Interacts with SepRS. Pyridoxal 5'-phosphate serves as cofactor.

It carries out the reaction O-phospho-L-seryl-tRNA(Cys) + hydrogen sulfide + H(+) = L-cysteinyl-tRNA(Cys) + phosphate. Its function is as follows. Converts O-phospho-L-seryl-tRNA(Cys) (Sep-tRNA(Cys)) to L-cysteinyl-tRNA(Cys) (Cys-tRNA(Cys)). This Methanococcus aeolicus (strain ATCC BAA-1280 / DSM 17508 / OCM 812 / Nankai-3) protein is O-phospho-L-seryl-tRNA:Cys-tRNA synthase.